Here is a 332-residue protein sequence, read N- to C-terminus: D-galactose/methyl-galactoside binding periplasmic protein MglB (332 aa).

Residues 1–23 form the signal peptide; that stretch reads MNKKVLTLSAVMASMLFGAAAHA. The beta-D-galactose site is built by Asp37 and Asn114. Residues Asp37 and Asn114 each coordinate beta-D-glucose. Residues Asp157, Asn159, Asp161, Gln163, and Gln165 each contribute to the Ca(2+) site. The beta-D-galactose site is built by His175, Asp177, and Arg181. Beta-D-glucose-binding residues include His175, Asp177, and Arg181. Glu228 contacts Ca(2+). 3 residues coordinate beta-D-galactose: Asn234, Asp259, and Asn279. Residues Asn234, Asp259, and Asn279 each coordinate beta-D-glucose.

The protein belongs to the bacterial solute-binding protein 2 family. In terms of assembly, the ABC transporter complex is composed of one ATP-binding protein (MglA), two transmembrane proteins (MglC) and a solute-binding protein (MglB).

It is found in the periplasm. Functionally, part of the ABC transporter complex MglABC involved in galactose/methyl galactoside import. In addition, binds D-galactose and D-glucose and plays a role in the chemotaxis towards these two sugars by interacting with the Trg chemoreceptor. The sequence is that of D-galactose/methyl-galactoside binding periplasmic protein MglB (mglB) from Escherichia coli O6:H1 (strain CFT073 / ATCC 700928 / UPEC).